Here is a 543-residue protein sequence, read N- to C-terminus: Periplasmic oligopeptide-binding protein OppA (543 aa).

A signal peptide spans 1 to 26 (MSNITKKSLIAAGILTALIAASAATA). Cys-297 and Cys-443 are joined by a disulfide.

Belongs to the bacterial solute-binding protein 5 family. The complex is composed of two ATP-binding proteins (OppD and OppF), two transmembrane proteins (OppB and OppC) and a solute-binding protein (OppA).

It localises to the periplasm. In terms of biological role, part of the ABC transporter complex OppABCDF involved in the uptake of oligopeptides, including the cell wall murein tripeptide L-alanyl-gamma-D-glutamyl-meso-diaminopimelate. Plays an important nutritional role and is involved in the recycling of cell wall peptides. Binds peptides containing from two to five amino acid residues regardless of their sequence. Also binds cell wall peptides, such as L-alanyl-gamma-D-glutamyl-meso-diaminopimelate. This is Periplasmic oligopeptide-binding protein OppA from Salmonella typhimurium (strain LT2 / SGSC1412 / ATCC 700720).